The primary structure comprises 936 residues: ABC transporter A family member 5 (936 aa).

A run of 7 helical transmembrane segments spans residues 34 to 54 (LIVI…LFDT), 340 to 360 (ASLI…PVML), 393 to 413 (FLAI…AIGL), 422 to 442 (SIQF…AFLV), 454 to 474 (VAAY…FQFL), 484 to 501 (WIYI…RGLY), and 527 to 547 (AMEE…IAAY). The region spanning 614–851 (IVCDNLKKVY…YGGSYVLTMT (238 aa)) is the ABC transporter domain. 652 to 659 (GPNGAGKT) is an ATP binding site.

It belongs to the ABC transporter superfamily. ABCA family. CPR flippase (TC 3.A.1.211) subfamily.

The protein localises to the membrane. The polypeptide is ABC transporter A family member 5 (ABCA5) (Arabidopsis thaliana (Mouse-ear cress)).